Here is a 426-residue protein sequence, read N- to C-terminus: Egl nine homolog 1 (426 aa).

Residue Ala2 is modified to N-acetylalanine. Residues 6 to 20 (GGPGGPSPSERDRQY) are required for nuclear export. Residue Ser12 is modified to Phosphoserine. Cys21, Cys24, Cys33, Cys36, Cys42, His46, His54, and Cys58 together coordinate Zn(2+). An MYND-type; atypical zinc finger spans residues 21–58 (CELCGKMENLLRCSRCRSSFYCCKEHQRQDWKKHKLVC). 2 disordered regions span residues 65–129 (LGHG…PCRA) and 160–184 (ANLYPPSNTPGDALSPGGGLRPNGQ). Pro residues predominate over residues 77–87 (PAPPAAVPPPR). The segment covering 89-103 (GAREPRKAAARRDNA) has biased composition (basic and acidic residues). A compositionally biased stretch (low complexity) spans 120–129 (PAAAASPCRA). Ser125 carries the phosphoserine modification. S-nitrosocysteine is present on residues Cys201 and Cys208. The interval 241–251 (VSQKSDSSKDI) is beta(2)beta(3) 'finger-like' loop. The Fe2OG dioxygenase domain occupies 291 to 392 (KINGRTKAMV…RYAITVWYFD (102 aa)). Cys302 is modified (S-nitrosocysteine). Residues His313 and Asp315 each contribute to the Fe cation site. An S-nitrosocysteine mark is found at Cys323 and Cys326. A Fe cation-binding site is contributed by His374. Residue Arg383 participates in 2-oxoglutarate binding.

Monomer. Interacts with ING4; the interaction inhibits the hydroxylation of HIF alpha proteins. Interacts with PTGES3 (via PXLE motif); thereby recruiting EGLN1 to the HSP90 pathway to facilitate HIF alpha proteins hydroxylation. Interacts with LIMD1. Found in a complex composed of LIMD1, VHL, EGLN1/PHD2, ELOB and CUL2. Interacts with EPAS1. Interacts with CBFA2T3. Interacts with HIF1A. It depends on Fe(2+) as a cofactor. L-ascorbate is required as a cofactor. S-nitrosylation inhibits the enzyme activity up to 60% under aerobic conditions. Chelation of Fe(2+) has no effect on the S-nitrosylation. It is uncertain whether nitrosylation occurs on Cys-323 or Cys-326. As to expression, according to PubMed:11056053, widely expressed with highest levels in skeletal muscle and heart, moderate levels in pancreas, brain (dopaminergic neurons of adult and fetal substantia nigra) and kidney, and lower levels in lung and liver. According to PubMed:12351678 widely expressed with highest levels in brain, kidney and adrenal gland. Expressed in cardiac myocytes, aortic endothelial cells and coronary artery smooth muscle. According to PubMed:12788921; expressed in adult and fetal heart, brain, liver, lung, skeletal muscle and kidney. Also expressed in placenta. Highest levels in adult heart, brain, lung and liver and fetal brain, heart spleen and skeletal muscle.

It localises to the cytoplasm. It is found in the nucleus. It catalyses the reaction L-prolyl-[hypoxia-inducible factor alpha subunit] + 2-oxoglutarate + O2 = trans-4-hydroxy-L-prolyl-[hypoxia-inducible factor alpha subunit] + succinate + CO2. Its activity is regulated as follows. Following exposure to hypoxia, activated in HeLa cells but not in cardiovascular cells. In terms of biological role, cellular oxygen sensor that catalyzes, under normoxic conditions, the post-translational formation of 4-hydroxyproline in hypoxia-inducible factor (HIF) alpha proteins. Hydroxylates a specific proline found in each of the oxygen-dependent degradation (ODD) domains (N-terminal, NODD, and C-terminal, CODD) of HIF1A. Also hydroxylates HIF2A. Has a preference for the CODD site for both HIF1A and HIF1B. Hydroxylated HIFs are then targeted for proteasomal degradation via the von Hippel-Lindau ubiquitination complex. Under hypoxic conditions, the hydroxylation reaction is attenuated allowing HIFs to escape degradation resulting in their translocation to the nucleus, heterodimerization with HIF1B, and increased expression of hypoxy-inducible genes. EGLN1 is the most important isozyme under normoxia and, through regulating the stability of HIF1, involved in various hypoxia-influenced processes such as angiogenesis in retinal and cardiac functionality. Target proteins are preferentially recognized via a LXXLAP motif. This Homo sapiens (Human) protein is Egl nine homolog 1.